A 560-amino-acid chain; its full sequence is MGAPILASAAHAVPALETGGHAMDASITSRETKGGRRLWYRMRVIQQPERARACGSGPKSSADRRPVDPPPVVELRIYEGQTWDQAQEKDITFVYNANFFLFATLEHARIMAHARGSASSANTPPVLTGMPVSGMAYLDRPEEAGYFLFPDLSVRHEGRYKLTFNLYEETKEDKDKDKERDVESQPPLTGLSPATGGSFDFRMEVKSQDFIVYSAKKFPGLAESTALSRVVAEQGCRVRIRRDVRMRRRDGKGAGDYDNGEEEYNRRRRTATPDNRNNDFAARARSMSGSTERTPYSADPQRRPSMADYPSQYAQNPPAGGHLQFLGGNASSQYPAAPPQPFAQPPSVPASPVYPPTQAAPYQMQTSYPPPPPPPAPKRERTPSQSGYAPINPAPRRESIHHDYRPSGPIQLPPLPPPPYYPPTPQQSHMPPPQPPQVLPPLQIDSNSKSNNRLPMPSPTALANSAPRPLASLAPLAPLMQSTSSSAGKGPVHPATLPPPAVYAGAKRAHDESFWSEPEHGRYQNGTRDKGRSEDIITDPTSMPFRRADGTEADGIRLRY.

Residues glycine 35 to arginine 241 form the Velvet domain. Residues glutamate 49 to cysteine 54 carry the Nuclear localization signal motif. 3 disordered regions span residues glutamate 49–proline 70, lysine 171–glycine 197, and aspartate 250–tyrosine 560. Over residues lysine 171–glutamate 183 the composition is skewed to basic and acidic residues. Residues alanine 336 to proline 355 show a composition bias toward pro residues. Residues proline 395–arginine 405 are compositionally biased toward basic and acidic residues. The span at glutamine 411–leucine 439 shows a compositional bias: pro residues. The span at isoleucine 444–arginine 453 shows a compositional bias: polar residues. The interval proline 455–threonine 496 is PEST. Residues alanine 461–leucine 479 are compositionally biased toward low complexity. Composition is skewed to basic and acidic residues over residues arginine 508–aspartate 535 and arginine 546–tyrosine 560.

The protein belongs to the velvet family. VeA subfamily. As to quaternary structure, component of the heterotrimeric velvet complex composed of laeA, veA and velB; VeA acting as a bridging protein between laeA and velB.

The protein localises to the nucleus. The protein resides in the cytoplasm. In terms of biological role, component of the velvet transcription factor complex that controls sexual/asexual developmental ratio in response to light, promoting sexual development in the darkness while stimulating asexual sporulation under illumination. The velvet complex acts as a global regulator for secondary metabolite gene expression. Positively regulates chaetoglobosin A biosynthesis by controlling the expression of core genes of the chaetoglobosin A biosynthetic gene cluster and other relevant regulators in a light-dependent manner. VeA directly regulates transcription factors brlA, laeA, and the chaetoglobosin A cluster-specific transcription regulator cheR. Also directly regulates the expression of one of the chaetoglobosin A cluster cytochrome P450 monooxygenases (cheE or cheG), but only indirectly regulates the expression of the PKS-NRPS hybrid cheA. Moreover, VeA has a significant effect on the asexual spores production, irrespective of light or dark condition. In Chaetomium globosum (strain ATCC 6205 / CBS 148.51 / DSM 1962 / NBRC 6347 / NRRL 1970) (Soil fungus), this protein is Developmental and secondary metabolism regulator veA.